Consider the following 197-residue polypeptide: Guanylate kinase (197 aa).

S2 bears the N-acetylserine mark. In terms of domain architecture, Guanylate kinase-like spans 4-186; it reads PRPVVLSGPS…AYAELKEALS (183 aa). An ATP-binding site is contributed by 14–19; the sequence is GAGKST. 37-51 contacts substrate; the sequence is SHTTRNPRPGEENGK. Catalysis depends on residues R44, R137, and R148. R137 is a binding site for ATP. 171 to 172 contributes to the ATP binding site; the sequence is ND.

The protein belongs to the guanylate kinase family. Monomer. Interacts with RD3. Widely expressed.

The protein resides in the photoreceptor inner segment. It localises to the cytoplasm. The protein localises to the cytosol. Its subcellular location is the mitochondrion. It carries out the reaction GMP + ATP = GDP + ADP. With respect to regulation, up-regulated by RD3. In terms of biological role, catalyzes the phosphorylation of GMP to GDP. Essential enzyme for recycling GMP and indirectly, cyclic GMP (cGMP). Involved in the cGMP metabolism in photoreceptors. It may also have a role in the survival and growth progression of some tumors. In addition to its physiological role, GUK1 is essential for converting prodrugs used for the treatment of cancers and viral infections into their pharmacologically active metabolites, most notably acyclovir, ganciclovir, and 6-thioguanine and its closely related analog 6-mercaptopurine. In Homo sapiens (Human), this protein is Guanylate kinase.